Here is a 308-residue protein sequence, read N- to C-terminus: Heme A synthase (308 aa).

The Cytoplasmic portion of the chain corresponds to 1–8; sequence MFKKRNLK. Residues 9 to 29 form a helical membrane-spanning segment; the sequence is WLSILATVIMAWVQLGGALVT. The Extracellular portion of the chain corresponds to 30–67; sequence KTGSENGCGASWPLCHGALLPQNLPIATIIELSHRATS. Cysteines 37 and 44 form a disulfide. The active site involves Glu-60. Heme o is bound at residue His-63. A helical transmembrane segment spans residues 68 to 88; the sequence is ALSLIVVLWLVITAWKNIGYI. Residues 89–93 are Cytoplasmic-facing; sequence KEVKP. A helical transmembrane segment spans residues 94 to 114; sequence LCIISVAFLLIQALVGAAAVL. Over 115–123 the chain is Extracellular; sequence WQQNDYVLA. A helical transmembrane segment spans residues 124–144; the sequence is LHFGISLISFSSVFVLTLIIF. A heme o-binding site is contributed by His-125. The Cytoplasmic segment spans residues 145 to 161; that stretch reads DVDQKYEANKVHIDRKL. A helical transmembrane segment spans residues 162–182; it reads RIYTWTMAICLYVGIYTGALV. Over 183-215 the chain is Extracellular; that stretch reads RHTKSSLAYGSWPLPFNDLIPHTEQDWVQLAHR. Residue His-214 participates in heme b binding. A helical membrane pass occupies residues 216 to 236; the sequence is TLALIASISVFLAFNYAIKHY. The Cytoplasmic portion of the chain corresponds to 237–244; it reads QNNRTIRY. The chain crosses the membrane as a helical span at residues 245–265; that stretch reads GYTAALLLIILQIVTGALSIF. Residues 266–270 lie on the Extracellular side of the membrane; it reads THVNL. A helical membrane pass occupies residues 271 to 291; the sequence is IIALLHALIITFEFGLIAYLI. Heme b is bound at residue His-276. The Cytoplasmic segment spans residues 292 to 308; it reads VLLLRSQRVEKVKQNAY.

Belongs to the COX15/CtaA family. Type 1 subfamily. In terms of assembly, interacts with CtaB. Requires heme b as cofactor.

Its subcellular location is the cell membrane. The enzyme catalyses Fe(II)-heme o + 2 A + H2O = Fe(II)-heme a + 2 AH2. The protein operates within porphyrin-containing compound metabolism; heme A biosynthesis; heme A from heme O: step 1/1. Its function is as follows. Catalyzes the conversion of heme O to heme A by two successive hydroxylations of the methyl group at C8. The first hydroxylation forms heme I, the second hydroxylation results in an unstable dihydroxymethyl group, which spontaneously dehydrates, resulting in the formyl group of heme A. In Staphylococcus carnosus (strain TM300), this protein is Heme A synthase.